Consider the following 1262-residue polypeptide: ATP-dependent helicase/nuclease subunit A (1262 aa).

The 472-residue stretch at 5–476 folds into the UvrD-like helicase ATP-binding domain; that stretch reads FSFTPSQDQA…IVLAENFRSM (472 aa). Residue 26-33 coordinates ATP; it reads ASAGSGKT. The region spanning 515 to 808 is the UvrD-like helicase C-terminal domain; it reads DTVTSTAELL…SVMTIHGSKG (294 aa).

The protein belongs to the helicase family. AddA subfamily. Heterodimer of AddA and AddB/RexB. The cofactor is Mg(2+).

It catalyses the reaction Couples ATP hydrolysis with the unwinding of duplex DNA by translocating in the 3'-5' direction.. The enzyme catalyses ATP + H2O = ADP + phosphate + H(+). The heterodimer acts as both an ATP-dependent DNA helicase and an ATP-dependent, dual-direction single-stranded exonuclease. Recognizes the chi site generating a DNA molecule suitable for the initiation of homologous recombination. The AddA nuclease domain is required for chi fragment generation; this subunit has the helicase and 3' -&gt; 5' nuclease activities. The chain is ATP-dependent helicase/nuclease subunit A from Levilactobacillus brevis (strain ATCC 367 / BCRC 12310 / CIP 105137 / JCM 1170 / LMG 11437 / NCIMB 947 / NCTC 947) (Lactobacillus brevis).